Consider the following 856-residue polypeptide: Putative zinc protease C28F5.4 (856 aa).

His71 is a Zn(2+) binding site. The active-site Proton acceptor is Glu74. His75 and Glu152 together coordinate Zn(2+).

The protein belongs to the peptidase M16 family.

The protein is Putative zinc protease C28F5.4 of Caenorhabditis elegans.